The following is a 594-amino-acid chain: ATP-dependent RNA helicase DBP9 (594 aa).

The short motif at 17–45 (TTFEAFHLDSRLLQAIKNIGFQYPTLIQS) is the Q motif element. A Helicase ATP-binding domain is found at 49–233 (PLALQQKRDI…QKFCRSPAIL (185 aa)). 62–69 (AATGSGKT) contributes to the ATP binding site. Positions 179 to 182 (DEVD) match the DEAD box motif. Residues 246-476 (KLLQYYVKVS…PYKFDQKQVE (231 aa)) enclose the Helicase C-terminal domain. 2 disordered regions span residues 339 to 377 (EDDE…QVKK) and 558 to 594 (TKVK…KNFK). Positions 345 to 366 (EGHNTENQEEKSLEGEPENDKK) are enriched in basic and acidic residues. Positions 567–584 (NAKKRHSHKKGRVSKPKN) are enriched in basic residues. The segment covering 585–594 (GKVDPLKNFK) has biased composition (basic and acidic residues).

It belongs to the DEAD box helicase family. DDX56/DBP9 subfamily. In terms of assembly, interacts with DBP6.

The protein localises to the nucleus. It localises to the nucleolus. The enzyme catalyses ATP + H2O = ADP + phosphate + H(+). Functionally, ATP-binding RNA helicase involved in the biogenesis of 60S ribosomal subunits and is required for the normal formation of 25S and 5.8S rRNAs. The sequence is that of ATP-dependent RNA helicase DBP9 (DBP9) from Saccharomyces cerevisiae (strain YJM789) (Baker's yeast).